The primary structure comprises 360 residues: Phospho-N-acetylmuramoyl-pentapeptide-transferase (360 aa).

Transmembrane regions (helical) follow at residues 19–39, 73–93, 95–115, 136–156, 173–193, 199–219, 233–253, 263–283, 288–308, and 338–358; these read LTYLTSRIILGALTALLLSIF, TMGGALIIFSITVSMLCWADL, SVYTWLALFVLLGFGAVGWTD, YLSLVALLTALWLYFLADTPI, GILFIPFVYLVLTGASNAVNL, GLAIMPVVLVSGGLCIFAYLS, IAGAGEMAIFCAAIAGAGLGF, VFMGDVGALSLGAALATVAVV, LAFAVMGGVFVAEALSVMIQV, and VTIRFWIITVVLVLVGLSTLK.

The protein belongs to the glycosyltransferase 4 family. MraY subfamily. Mg(2+) serves as cofactor.

The protein localises to the cell inner membrane. The catalysed reaction is UDP-N-acetyl-alpha-D-muramoyl-L-alanyl-gamma-D-glutamyl-meso-2,6-diaminopimeloyl-D-alanyl-D-alanine + di-trans,octa-cis-undecaprenyl phosphate = di-trans,octa-cis-undecaprenyl diphospho-N-acetyl-alpha-D-muramoyl-L-alanyl-D-glutamyl-meso-2,6-diaminopimeloyl-D-alanyl-D-alanine + UMP. The protein operates within cell wall biogenesis; peptidoglycan biosynthesis. Functionally, catalyzes the initial step of the lipid cycle reactions in the biosynthesis of the cell wall peptidoglycan: transfers peptidoglycan precursor phospho-MurNAc-pentapeptide from UDP-MurNAc-pentapeptide onto the lipid carrier undecaprenyl phosphate, yielding undecaprenyl-pyrophosphoryl-MurNAc-pentapeptide, known as lipid I. This chain is Phospho-N-acetylmuramoyl-pentapeptide-transferase, found in Dichelobacter nodosus (strain VCS1703A).